Reading from the N-terminus, the 198-residue chain is UPF0314 protein Saro_1818 (198 aa).

5 consecutive transmembrane segments (helical) span residues 13–33 (GGSLAAFGVGLAVVIILLGMG), 62–82 (WYSFSHLIHGFLFYGAAHIVW), 96–116 (LALAVLIEGSWEILENSPIII), 153–173 (APVLVTVVLGIGFELFTLWAI), and 177–197 (LALNILMLVWPVEAVRVWQGG).

The protein belongs to the UPF0314 family.

It is found in the cell membrane. The protein is UPF0314 protein Saro_1818 of Novosphingobium aromaticivorans (strain ATCC 700278 / DSM 12444 / CCUG 56034 / CIP 105152 / NBRC 16084 / F199).